Consider the following 451-residue polypeptide: Acetylornithine aminotransferase, mitochondrial (451 aa).

Position 302 is an N6-(pyridoxal phosphate)lysine (Lys302).

The protein belongs to the class-III pyridoxal-phosphate-dependent aminotransferase family. Pyridoxal 5'-phosphate serves as cofactor. As to expression, found at highest levels in nodules, confined to the infected cells.

It is found in the mitochondrion. The catalysed reaction is N(2)-acetyl-L-ornithine + 2-oxoglutarate = N-acetyl-L-glutamate 5-semialdehyde + L-glutamate. It functions in the pathway amino-acid biosynthesis; L-arginine biosynthesis; N(2)-acetyl-L-ornithine from L-glutamate: step 4/4. Its function is as follows. Involved in the biosynthesis of citrulline. The sequence is that of Acetylornithine aminotransferase, mitochondrial (AG118) from Alnus glutinosa (European alder).